We begin with the raw amino-acid sequence, 846 residues long: Translation initiation factor IF-2 (846 aa).

Residues 345–512 (SRAPVVTIMG…AVLLQSEVLE (168 aa)) form the tr-type G domain. The interval 354-361 (GHVDHGKT) is G1. 354 to 361 (GHVDHGKT) is a GTP binding site. Residues 379–383 (GITQH) form a G2 region. The tract at residues 400–403 (DTPG) is G3. GTP contacts are provided by residues 400 to 404 (DTPGH) and 454 to 457 (NKID). The segment at 454–457 (NKID) is G4. The interval 490–492 (SAK) is G5.

It belongs to the TRAFAC class translation factor GTPase superfamily. Classic translation factor GTPase family. IF-2 subfamily.

It localises to the cytoplasm. One of the essential components for the initiation of protein synthesis. Protects formylmethionyl-tRNA from spontaneous hydrolysis and promotes its binding to the 30S ribosomal subunits. Also involved in the hydrolysis of GTP during the formation of the 70S ribosomal complex. In Francisella tularensis subsp. holarctica (strain FTNF002-00 / FTA), this protein is Translation initiation factor IF-2.